The sequence spans 41 residues: Photosystem I reaction center subunit IX (41 aa).

A helical membrane pass occupies residues Tyr-7–Ile-27.

This sequence belongs to the PsaJ family.

It localises to the plastid. It is found in the chloroplast thylakoid membrane. Its function is as follows. May help in the organization of the PsaE and PsaF subunits. The chain is Photosystem I reaction center subunit IX from Jasminum nudiflorum (Winter jasmine).